A 322-amino-acid polypeptide reads, in one-letter code: CMP-sialic acid transporter 1 (322 aa).

The Cytoplasmic portion of the chain corresponds to 1–2 (MQ). A helical membrane pass occupies residues 3–23 (WYLVAALLTVLTSSQGILTTL). At 24–33 (SQSNGKYKYD) the chain is on the lumenal side. Residues 34 to 54 (YATIPFLAELFKLSFSSFFLW) traverse the membrane as a helical segment. Residues 55–75 (KECQSSSPPRMTKEWRSIRLY) are Cytoplasmic-facing. A helical membrane pass occupies residues 76-96 (LVPSVIYLIHNNVQFATLTYV). Residues 97 to 100 (DPST) lie on the Lumenal side of the membrane. A helical transmembrane segment spans residues 101–120 (YQIMGNLKIVTTGILFRLVL). Over 121-126 (KRKLSN) the chain is Cytoplasmic. The helical transmembrane segment at 127 to 144 (LQWMAVVLLAVGTTTSQV) threads the bilayer. The Lumenal segment spans residues 145–157 (KGCGDAPCDSLFS). A helical transmembrane segment spans residues 158–178 (APFQGYMLGILSACLSALAGV). The Cytoplasmic segment spans residues 179 to 198 (YTEYLMKKNNDSLYWQNVQL). The chain crosses the membrane as a helical span at residues 199-219 (YTFGVIFNMGWLIYGDFKAGF). The Lumenal segment spans residues 220-233 (ERGPWWQRLFNGYS). A helical transmembrane segment spans residues 234–254 (ITTWMVVFNLGSTGLLVSWLM). The Cytoplasmic portion of the chain corresponds to 255–262 (KYSDNIVK). The chain crosses the membrane as a helical span at residues 263–283 (VYSTSMAMLLTMVLSVYLFNV). At 284-286 (RAT) the chain is on the lumenal side.

The protein belongs to the nucleotide-sugar transporter family. CMP-Sialate:CMP antiporter (TC 2.A.7.12) subfamily. In terms of tissue distribution, expressed in roots, leaves and stalks.

The protein localises to the golgi apparatus membrane. Its function is as follows. Sugar transporter involved in the transport of CMP-sialic acid from the cytoplasm into the Golgi. May transport important nucleotide sugars such as CMP-Kdo (2-keto-3-deoxy-D-manno-octulosonic acid) in physiological conditions. In Oryza sativa subsp. japonica (Rice), this protein is CMP-sialic acid transporter 1.